The sequence spans 189 residues: FAS1 domain-containing protein mug57 (189 aa).

Residues 1 to 24 (MMKLFCLNIFRFLYTTSFISAVLS) form the signal peptide. Residues 37–182 (EPRLFELLAE…GEMWVLNATL (146 aa)) form the FAS1 domain.

Its subcellular location is the cytoplasm. The protein localises to the nucleus. It localises to the membrane. In terms of biological role, has a role in sporulation. This chain is FAS1 domain-containing protein mug57 (mug57), found in Schizosaccharomyces pombe (strain 972 / ATCC 24843) (Fission yeast).